Here is a 528-residue protein sequence, read N- to C-terminus: GMP synthase [glutamine-hydrolyzing] (528 aa).

The Glutamine amidotransferase type-1 domain maps to 13 to 204 (AIVILDFGSQ…VYHICGCEPD (192 aa)). The active-site Nucleophile is the cysteine 90. Residues histidine 178 and glutamate 180 contribute to the active site. The GMPS ATP-PPase domain maps to 205 to 403 (WTTEAFIDEA…LGLPEEIVSR (199 aa)). 232–238 (SGGVDSS) provides a ligand contact to ATP.

As to quaternary structure, homodimer.

The enzyme catalyses XMP + L-glutamine + ATP + H2O = GMP + L-glutamate + AMP + diphosphate + 2 H(+). It functions in the pathway purine metabolism; GMP biosynthesis; GMP from XMP (L-Gln route): step 1/1. Functionally, catalyzes the synthesis of GMP from XMP. The chain is GMP synthase [glutamine-hydrolyzing] from Synechococcus sp. (strain CC9311).